A 328-amino-acid polypeptide reads, in one-letter code: Small ribosomal subunit protein bS1A (328 aa).

3 S1 motif domains span residues G31 to R100, D118 to R182, and A196 to K264. Residues E298–E328 are disordered. Positions D311–E328 are enriched in acidic residues.

It belongs to the bacterial ribosomal protein bS1 family.

Its function is as follows. Binds mRNA. This Synechocystis sp. (strain ATCC 27184 / PCC 6803 / Kazusa) protein is Small ribosomal subunit protein bS1A (rps1A).